Here is a 238-residue protein sequence, read N- to C-terminus: MTSPQNDLLSLATPYALHALSHAEAADIDRALNDAPPGVADAFLAEVRAVRETMAALASATAVEPPARMRDAVLRQIAEDPVRTLPVRSSSRRRAAAVLSAAAAVVIGLGTLAVGYALRPAPTPSTAEQVFAAPDVRTISGEIPGGGTATVVFSREQNSGVLVMNNVPPPQPGTVYQMWLVDADGSHSAGTMDAEAVAPSTTAVLPDLGSSRALAFTVEPPGGSTRPTTPVFAELPLT.

Residues 1-97 lie on the Cytoplasmic side of the membrane; sequence MTSPQNDLLS…RSSSRRRAAA (97 aa). The helical transmembrane segment at 98–118 threads the bilayer; sequence VLSAAAAVVIGLGTLAVGYAL. The Extracellular portion of the chain corresponds to 119-238; sequence RPAPTPSTAE…TPVFAELPLT (120 aa).

This sequence belongs to the anti-sigma-K factor family.

The protein resides in the cell membrane. An anti-sigma factor for extracytoplasmic function (ECF) sigma factor SigK. ECF sigma factors are held in an inactive form by an anti-sigma factor until released by regulated intramembrane proteolysis (RIP). RIP occurs when an extracytoplasmic signal triggers a concerted proteolytic cascade to transmit information and elicit cellular responses. The membrane-spanning regulatory substrate protein is first cut extracytoplasmically (site-1 protease, S1P), then within the membrane itself (site-2 protease, S2P, Rip1), while cytoplasmic proteases finish degrading the regulatory protein, liberating the sigma factor. The polypeptide is Anti-sigma-K factor RskA (rskA) (Mycolicibacterium vanbaalenii (strain DSM 7251 / JCM 13017 / BCRC 16820 / KCTC 9966 / NRRL B-24157 / PYR-1) (Mycobacterium vanbaalenii)).